A 1134-amino-acid chain; its full sequence is MPISYCVSAKKASVVVESVVGNFTGHENVNLIVARGNRIDVQLVSPEGLKNVCEIPIYGQVLTIALVKCKRDKRHSLIVVTEKWHMAILAYRDGKVVTRAAGCIADPTGRATDNLFSLTIHRNGLIAIRAFEGSVKMIQWESGTDLRHFNVRFDYPNVSDFKFVDTGEDDVYRVAFIYDDDHGKHLQFSDLNMHDKEFRTYSRQASIAADSSVLIPVPHAIGGVIVLGSNSVLYKPNDNLGEVVPYTCSLLENTTFTCHGIVDASGERFLLSDTDGRLLMLLLNVTESQSGYTVKEMRIDYLGETSIADSINYIDNGVVFVGSRLGDSQLIRLMTEPNGGSYSVILETYSNIGPIRDMVMVESDGQPQLVTCTGADKDGSLRVIRNGIGIDELASVDLAGVVGIFPIRLDSNADNYVIVSLSDETHVLQITGEELEDVKLLEINTDLPTIFASTLFGPNDSGIILQATEKQIRLMSSSGLSKFWEPTNGEIISKVSVNAANGQIVLAARDTVYLLTCIVDEMGALDIQLTAEKKFENEIACLDLSNEGDDPNNKATFLVLAFWSTFAMEVIQLPDLITVCHTDLPTKIIPRSIIATCIEEVHYLLVAFGDGALVYYVFDIKTGTHGEPKKSNVGTRPPSLHRVRNKNRQHLFVCSDRPVIIFSASKKLVFSNVNVKLVDTVCSLSSSAYRDCLVISDGNSMVFGTVDDIQKIHVRSIPMGESVLRIAYQKSTSTYGVCSNRTESKAERVFASKNALVTSQSRPKVASTRADMDESPPNTTSSFMVLDQNTFQVLHSHEFGPWETALSCISGQFTNDSSTYYVVGTGLIYPDETETKIGRIVVFEVDDVERSKLRRVHELVVRGSPLAIRILNGKLVAAINSSIRLFEWTTDKELRLECSSFNHVIALDLKVMNEEVAVADVMRSVSLLSYRMLEGNFEEVAKDWNSQWMVTCEFITAESILGGEAHLNLFTVEVDKTRPITDDGRYVLEPTGYWYLGELPKVMTRSTLVIQPEDSIIQYSQPIMFGTNQGTIGMIVQIDDKWKKFLIAIEKAIADSVKNCMHIEHSSYRTFVFQKRAEPPSGFVDGDLVESILDMDRSVAMDILSKVSDKGWDPSLPRDPVEILKVIEDLARMH.

The protein belongs to the DDB1 family. Interacts with cdt-1 and cul-4. In terms of tissue distribution, expressed at high levels in the spermatheca of adult hermaphrodites.

Its subcellular location is the cytoplasm. It localises to the nucleus. It functions in the pathway protein modification; protein ubiquitination. Plays a role in DNA repair. May be a component of an E3 ubiquitin-protein ligase which promotes histone ubiquitination in response to UV irradiation. Histone ubiquitination may be important for subsequent DNA repair. Promotes the degradation of the replication licensing factor cdt-1 during S-phase, thereby preventing rereplication of DNA during a single round of cell division. In Caenorhabditis elegans, this protein is DNA damage-binding protein 1 (ddb-1).